The chain runs to 438 residues: UPF0597 protein YE0448 (438 aa).

It belongs to the UPF0597 family.

The chain is UPF0597 protein YE0448 from Yersinia enterocolitica serotype O:8 / biotype 1B (strain NCTC 13174 / 8081).